The primary structure comprises 269 residues: Probable cysteine protease avirulence protein AvrPpiC2 (269 aa).

The segment at 1–39 (MTIVSGHIGKHPSLTTVQAGSSASVENQMPDPAQFSDGR) is disordered. Positions 13–27 (SLTTVQAGSSASVEN) are enriched in polar residues. Catalysis depends on residues cysteine 72, histidine 213, and aspartate 230.

Belongs to the peptidase C58 family.

Its function is as follows. Potential cysteine protease. Avirulence protein, which may be essential during infection of plant cells from Pea and some Arabidopsis thaliana cultivars. May act by affecting the plant defense system. In plants lacking appropriate resistance (R) gene, it probably impairs the plant defense system and leads to the bacteria multiplication. In contrast, in plants containing the appropriate R protein, it is unable to induce disease symptoms, explaining its avirulence name. The chain is Probable cysteine protease avirulence protein AvrPpiC2 (avrPpiC2) from Pseudomonas syringae pv. pisi.